The chain runs to 178 residues: FXYD domain-containing ion transport regulator 5 (178 aa).

The signal sequence occupies residues 1–21 (MSPPSQLCLLTIVALILPSEG). A disordered region spans residues 21–126 (GQTPEKPRSS…YMPPSYIENP (106 aa)). Residues 22 to 146 (QTPEKPRSSF…YDNTTLRKRG (125 aa)) lie on the Extracellular side of the membrane. A compositionally biased stretch (polar residues) spans 29–58 (SSFTAHQSSVTTHVPVPDQTSPGVQTTPPI). Low complexity predominate over residues 70-79 (QTAAKTKTQQ). Residues 147-164 (LLVAAVLFITGIIILTSG) traverse the membrane as a helical segment. Over 165–178 (KCRQFSQLCLNRHR) the chain is Cytoplasmic.

The protein belongs to the FXYD family. In terms of assembly, regulatory subunit of the sodium/potassium-transporting ATPase which is composed of a catalytic alpha subunit, a non-catalytic beta subunit and an additional regulatory subunit. The regulatory subunit, a member of the FXYD protein family, modulates the enzymatic activity in a tissue- and isoform-specific way by changing affinities of the Na+/K+-ATPase toward Na(+), K(+) or ATP. In terms of processing, glycosylated. As to expression, spleen, lung, skeletal muscle, and testis.

The protein resides in the cell membrane. It localises to the basolateral cell membrane. Its function is as follows. Associates with and regulates the activity of the sodium/potassium-transporting ATPase (NKA) which catalyzes the hydrolysis of ATP coupled with the exchange of Na(+) and K(+) ions across the plasma membrane. May increase NKA activity by increasing the apparent affinity for Na(+). Involved in down-regulation of E-cadherin which results in reduced cell adhesion. Promotes metastasis. This Rattus norvegicus (Rat) protein is FXYD domain-containing ion transport regulator 5 (Fxyd5).